The following is an 85-amino-acid chain: MKSDIHPKYAAVVFNDLASGTKFLTKSTVSSSKTIEWEDGNTYPVIDVEISSESHPFYTGKQRIMDSAGRVERFNARFKGFGGKK.

It belongs to the bacterial ribosomal protein bL31 family. Type B subfamily. In terms of assembly, part of the 50S ribosomal subunit.

The sequence is that of Large ribosomal subunit protein bL31B from Pseudarthrobacter chlorophenolicus (strain ATCC 700700 / DSM 12829 / CIP 107037 / JCM 12360 / KCTC 9906 / NCIMB 13794 / A6) (Arthrobacter chlorophenolicus).